The chain runs to 316 residues: Pantothenate kinase (316 aa).

Residue 95–102 coordinates ATP; sequence GSVAVGKS.

This sequence belongs to the prokaryotic pantothenate kinase family.

The protein localises to the cytoplasm. It catalyses the reaction (R)-pantothenate + ATP = (R)-4'-phosphopantothenate + ADP + H(+). It functions in the pathway cofactor biosynthesis; coenzyme A biosynthesis; CoA from (R)-pantothenate: step 1/5. This is Pantothenate kinase from Shewanella putrefaciens (strain CN-32 / ATCC BAA-453).